Consider the following 793-residue polypeptide: Probable exo-1,4-beta-xylosidase xlnD (793 aa).

Positions methionine 1 to glycine 20 are cleaved as a signal peptide. N-linked (GlcNAc...) asparagine glycosylation is found at asparagine 23, asparagine 87, and asparagine 142. Aspartate 310 is a catalytic residue. N-linked (GlcNAc...) asparagine glycans are attached at residues asparagine 326, asparagine 385, asparagine 404, asparagine 440, asparagine 477, asparagine 518, asparagine 559, asparagine 614, asparagine 652, asparagine 679, and asparagine 701.

The protein belongs to the glycosyl hydrolase 3 family.

Its subcellular location is the secreted. The enzyme catalyses Hydrolysis of (1-&gt;4)-beta-D-xylans, to remove successive D-xylose residues from the non-reducing termini.. It functions in the pathway glycan degradation; xylan degradation. Its function is as follows. Xylan 1,4-beta-xylosidase involved in the hydrolysis of xylan, a major structural heterogeneous polysaccharide found in plant biomass representing the second most abundant polysaccharide in the biosphere, after cellulose. The sequence is that of Probable exo-1,4-beta-xylosidase xlnD (xlnD) from Aspergillus terreus (strain NIH 2624 / FGSC A1156).